Consider the following 261-residue polypeptide: Calcium-binding protein 8 (261 aa).

Positions Met-1 to Glu-41 are disordered. Over Met-1–Ser-234 the chain is Cytoplasmic. Residues Gly-8–Pro-33 are compositionally biased toward basic and acidic residues. 2 consecutive EF-hand domains span residues Glu-78–Met-113 and Pro-114–Ser-149. Residues Asp-91, Asp-93, Asn-95, Glu-102, Asp-127, Asp-129, Asp-131, Gln-133, and Glu-138 each contribute to the Ca(2+) site. Residues Leu-235 to Ile-255 form a helical; Anchor for type IV membrane protein membrane-spanning segment. Residues Leu-256–Glu-261 are Extracellular-facing.

Interacts with PI4KB. This binding competes with FREQ/NCS1 binding in a calcium-dependent manner. Brain-specific. High expression in the cerebellum, hippocampus, and cortex.

The protein localises to the golgi apparatus. The protein resides in the trans-Golgi network membrane. It localises to the cytoplasm. Its subcellular location is the perinuclear region. It is found in the cell membrane. Its function is as follows. Negatively regulates Golgi-to-plasma membrane trafficking by interacting with PI4KB and inhibiting its activity. May play a role in the physiology of neurons and is potentially important in memory and learning. The chain is Calcium-binding protein 8 (Caln1) from Mus musculus (Mouse).